Here is a 317-residue protein sequence, read N- to C-terminus: Fe-S cluster assembly protein DRE2 (317 aa).

Positions 1-131 are N-terminal SAM-like domain; it reads MERMLFLSPP…KPNFGAQDTV (131 aa). The linker stretch occupies residues 132–209; sequence PLKLGKKKKA…EEALMDEEDM (78 aa). 4 residues coordinate [2Fe-2S] cluster: C219, C230, C233, and C235. Positions 219–235 are fe-S binding site A; the sequence is CRPKAGKRRRACKDCTC. [4Fe-4S] cluster contacts are provided by C280, C283, C291, and C294. Short sequence motifs (cx2C motif) lie at residues 280–283 and 291–294; these read CGNC and CDGC. The fe-S binding site B stretch occupies residues 280–294; the sequence is CGNCALGDAFRCDGC.

The protein belongs to the anamorsin family. As to quaternary structure, monomer. Interacts with TAH18. Interacts with MIA40. [2Fe-2S] cluster serves as cofactor. The cofactor is [4Fe-4S] cluster.

It localises to the cytoplasm. It is found in the mitochondrion intermembrane space. Its function is as follows. Component of the cytosolic iron-sulfur (Fe-S) protein assembly (CIA) machinery required for the maturation of extramitochondrial Fe-S proteins. Part of an electron transfer chain functioning in an early step of cytosolic Fe-S biogenesis, facilitating the de novo assembly of a [4Fe-4S] cluster on the scaffold complex CFD1-NBP35. Electrons are transferred to DRE2 from NADPH via the FAD- and FMN-containing protein TAH18. TAH18-DRE2 are also required for the assembly of the diferric tyrosyl radical cofactor of ribonucleotide reductase (RNR), probably by providing electrons for reduction during radical cofactor maturation in the catalytic small subunit RNR2. This Uncinocarpus reesii (strain UAMH 1704) protein is Fe-S cluster assembly protein DRE2.